A 500-amino-acid chain; its full sequence is Lysine--tRNA ligase (500 aa).

Glu410 and Glu417 together coordinate Mg(2+).

It belongs to the class-II aminoacyl-tRNA synthetase family. As to quaternary structure, homodimer. Mg(2+) serves as cofactor.

The protein resides in the cytoplasm. It carries out the reaction tRNA(Lys) + L-lysine + ATP = L-lysyl-tRNA(Lys) + AMP + diphosphate. This chain is Lysine--tRNA ligase, found in Pseudomonas savastanoi pv. phaseolicola (strain 1448A / Race 6) (Pseudomonas syringae pv. phaseolicola (strain 1448A / Race 6)).